The chain runs to 625 residues: PTS system beta-glucoside-specific EIIBCA component (625 aa).

In terms of domain architecture, PTS EIIB type-1 spans 1-84 (MTELARKIVA…NSVAGLDEKA (84 aa)). Residues 1 to 99 (MTELARKIVA…NDDKGNLLNR (99 aa)) lie on the Periplasmic side of the membrane. Cys24 serves as the catalytic Phosphocysteine intermediate; for EIIB activity. Residues 100–120 (FVYVISGIFTPLIGLMAATGI) traverse the membrane as a helical segment. In terms of domain architecture, PTS EIIC type-1 spans 102 to 465 (YVISGIFTPL…RQPAQGAPQE (364 aa)). The Cytoplasmic segment spans residues 121–140 (LKGMLALALTFQWTTEQSGT). The helical transmembrane segment at 141–161 (YLILFSASDALFWFFPIILGY) threads the bilayer. Residues 162-166 (TAGKR) are Periplasmic-facing. A helical membrane pass occupies residues 167–187 (FGGNPFTAMVIGGALVHPLIL). The Cytoplasmic segment spans residues 188–202 (TAFENGQKADALGLD). A helical membrane pass occupies residues 203–223 (FLGIPVTLLNYSSSVIPIIFS). Residues 224–244 (AWLCSILERRLNAWLPSAIKN) lie on the Periplasmic side of the membrane. The chain crosses the membrane as a helical span at residues 245–265 (FFTPLLCLMVITPVTFLLVGP). At 266 to 284 (LSTWISELIAAGYLWLYQA) the chain is on the cytoplasmic side. Residues 285 to 305 (VPAFAGAVMGGFWQIFVMFGL) form a helical membrane-spanning segment. The Periplasmic portion of the chain corresponds to 306-324 (HWGLVPLCINNFTVLGYDT). The helical transmembrane segment at 325–345 (MIPLLMPAIMAQVGAALGVFL) threads the bilayer. At 346–353 (CERDAQKK) the chain is on the cytoplasmic side. Residues 354 to 374 (VVAGSAALTSLFGITEPAVYG) traverse the membrane as a helical segment. At 375-380 (VNLPRK) the chain is on the periplasmic side. The chain crosses the membrane as a helical span at residues 381–401 (YPFVIACISGALGATIIGYAQ). Over 402–403 (TK) the chain is Cytoplasmic. Residues 404–424 (VYSFGLPSIFTFMQTIPSTGI) traverse the membrane as a helical segment. Topologically, residues 425-431 (DFTVWAS) are periplasmic. The chain crosses the membrane as a helical span at residues 432-452 (VIGGVIAIGCAFVGTVMLHFI). Topologically, residues 453 to 625 (TAKRQPAQGA…AGEPLLSIIR (173 aa)) are cytoplasmic. Residues 495 to 599 (DTTFASGLLG…DLTTPVLISN (105 aa)) form the PTS EIIA type-1 domain. Catalysis depends on His547, which acts as the Tele-phosphohistidine intermediate; for EIIA activity.

The protein resides in the cell inner membrane. Functionally, the phosphoenolpyruvate-dependent sugar phosphotransferase system (sugar PTS), a major carbohydrate active -transport system, catalyzes the phosphorylation of incoming sugar substrates concomitantly with their translocation across the cell membrane. This system is involved in beta-glucoside transport. Its function is as follows. Acts both as a kinase and as a phosphatase on BglG. The sequence is that of PTS system beta-glucoside-specific EIIBCA component (bglF) from Escherichia coli (strain K12).